The sequence spans 688 residues: Chaperone protein dnaK1 (688 aa).

At T198 the chain carries Phosphothreonine; by autocatalysis. Over residues 630-661 (DLPRDSYRERDAYNNRDYGRDYGRDYGRDSRP) the composition is skewed to basic and acidic residues. A disordered region spans residues 630–688 (DLPRDSYRERDAYNNRDYGRDYGRDYGRDSRPSYDNSRPPRKSPRPSYQDNWDDDDDWL).

This sequence belongs to the heat shock protein 70 family.

Functionally, acts as a chaperone. The protein is Chaperone protein dnaK1 (dnaK1) of Nostoc sp. (strain PCC 7120 / SAG 25.82 / UTEX 2576).